A 365-amino-acid polypeptide reads, in one-letter code: tRNA/tmRNA (uracil-C(5))-methyltransferase (365 aa).

Positions 189, 217, 222, 238, and 298 each coordinate S-adenosyl-L-methionine. The Nucleophile role is filled by Cys-323. Glu-357 acts as the Proton acceptor in catalysis.

It belongs to the class I-like SAM-binding methyltransferase superfamily. RNA M5U methyltransferase family. TrmA subfamily.

The catalysed reaction is uridine(54) in tRNA + S-adenosyl-L-methionine = 5-methyluridine(54) in tRNA + S-adenosyl-L-homocysteine + H(+). It carries out the reaction uridine(341) in tmRNA + S-adenosyl-L-methionine = 5-methyluridine(341) in tmRNA + S-adenosyl-L-homocysteine + H(+). In terms of biological role, dual-specificity methyltransferase that catalyzes the formation of 5-methyluridine at position 54 (m5U54) in all tRNAs, and that of position 341 (m5U341) in tmRNA (transfer-mRNA). This Shewanella halifaxensis (strain HAW-EB4) protein is tRNA/tmRNA (uracil-C(5))-methyltransferase.